The chain runs to 277 residues: Large ribosomal subunit protein uL2 (277 aa).

Residues 223–277 form a disordered region; that stretch reads VTMNPVDHPHGGGEGRTSGGRHPVTPWGKPTKGMKTRSNKATDKFIVTSRHKRKK.

This sequence belongs to the universal ribosomal protein uL2 family. As to quaternary structure, part of the 50S ribosomal subunit. Forms a bridge to the 30S subunit in the 70S ribosome.

Its function is as follows. One of the primary rRNA binding proteins. Required for association of the 30S and 50S subunits to form the 70S ribosome, for tRNA binding and peptide bond formation. It has been suggested to have peptidyltransferase activity; this is somewhat controversial. Makes several contacts with the 16S rRNA in the 70S ribosome. This Azorhizobium caulinodans (strain ATCC 43989 / DSM 5975 / JCM 20966 / LMG 6465 / NBRC 14845 / NCIMB 13405 / ORS 571) protein is Large ribosomal subunit protein uL2.